Here is a 294-residue protein sequence, read N- to C-terminus: UDP-N-acetylenolpyruvoylglucosamine reductase (294 aa).

Residues 26–189 (VGGQADVLFK…IEAEFKGVSS (164 aa)) enclose the FAD-binding PCMH-type domain. Arg-169 is an active-site residue. Residue Cys-218 is the Proton donor of the active site. Residue Glu-288 is part of the active site.

This sequence belongs to the MurB family. It depends on FAD as a cofactor.

The protein localises to the cytoplasm. The catalysed reaction is UDP-N-acetyl-alpha-D-muramate + NADP(+) = UDP-N-acetyl-3-O-(1-carboxyvinyl)-alpha-D-glucosamine + NADPH + H(+). Its pathway is cell wall biogenesis; peptidoglycan biosynthesis. Its function is as follows. Cell wall formation. The protein is UDP-N-acetylenolpyruvoylglucosamine reductase of Wolbachia pipientis subsp. Culex pipiens (strain wPip).